We begin with the raw amino-acid sequence, 56 residues long: Large ribosomal subunit protein bL33 (56 aa).

Residues 1–12 show a composition bias toward basic and acidic residues; the sequence is MASKGGRDKIKL. The interval 1 to 28 is disordered; it reads MASKGGRDKIKLESTAGTGHFYTTTKNK. Positions 15–25 are enriched in polar residues; the sequence is TAGTGHFYTTT.

It belongs to the bacterial ribosomal protein bL33 family.

In Cupriavidus necator (strain ATCC 17699 / DSM 428 / KCTC 22496 / NCIMB 10442 / H16 / Stanier 337) (Ralstonia eutropha), this protein is Large ribosomal subunit protein bL33.